Consider the following 594-residue polypeptide: Proteasome-associated ATPase (594 aa).

Residues 1–12 (MTETSANKPENT) show a composition bias toward polar residues. The segment at 1 to 20 (MTETSANKPENTQAHEGRDY) is disordered. The stretch at 18 to 71 (RDYSVLERQFNVLRDKLRNVDRQLAAATQNNTKMTTTLQSAKAEILRLKSALEK) forms a coiled coil. 282–287 (GCGKTL) is an ATP binding site. A docks into pockets in the proteasome alpha-ring region spans residues 593–594 (YL).

Belongs to the AAA ATPase family. As to quaternary structure, homohexamer. Assembles into a hexameric ring structure that caps the 20S proteasome core. Strongly interacts with the prokaryotic ubiquitin-like protein Pup through a hydrophobic interface; the interacting region of ARC lies in its N-terminal coiled-coil domain. There is one Pup binding site per ARC hexamer ring. Upon ATP-binding, the C-terminus of ARC interacts with the alpha-rings of the proteasome core, possibly by binding to the intersubunit pockets.

It participates in protein degradation; proteasomal Pup-dependent pathway. Functionally, ATPase which is responsible for recognizing, binding, unfolding and translocation of pupylated proteins into the bacterial 20S proteasome core particle. May be essential for opening the gate of the 20S proteasome via an interaction with its C-terminus, thereby allowing substrate entry and access to the site of proteolysis. Thus, the C-termini of the proteasomal ATPase may function like a 'key in a lock' to induce gate opening and therefore regulate proteolysis. This is Proteasome-associated ATPase from Renibacterium salmoninarum (strain ATCC 33209 / DSM 20767 / JCM 11484 / NBRC 15589 / NCIMB 2235).